The chain runs to 326 residues: Vacuolar protein sorting-associated protein 26A-A (326 aa).

Positions threonine 306–isoleucine 326 are disordered. Over residues glutamine 315 to isoleucine 326 the composition is skewed to low complexity.

The protein belongs to the VPS26 family. As to quaternary structure, component of the heterotrimeric retromer cargo-selective complex (CSC) which is believed to associate with variable sorting nexins to form functionally distinct retromer complex variants.

Its subcellular location is the cytoplasm. The protein resides in the endosome membrane. The protein localises to the early endosome. Functionally, acts as a component of the retromer cargo-selective complex (CSC). The CSC is believed to be the core functional component of retromer or respective retromer complex variants acting to prevent missorting of selected transmembrane cargo proteins into the lysosomal degradation pathway. Retromer mediates retrograde transport of cargo proteins from endosomes to the trans-Golgi network (TGN). The polypeptide is Vacuolar protein sorting-associated protein 26A-A (vps26a-a) (Xenopus laevis (African clawed frog)).